Reading from the N-terminus, the 65-residue chain is Large ribosomal subunit protein bL35 (65 aa).

Residues 1 to 51 (MPKIKTNRGAAKRFRKSASGRVKRGNAFTSHILTHKTRKNKRNLRGTSMVS) are disordered. Basic residues-rich tracts occupy residues 10-24 (AAKR…RVKR) and 33-44 (LTHKTRKNKRNL).

It belongs to the bacterial ribosomal protein bL35 family.

The chain is Large ribosomal subunit protein bL35 from Pelobacter propionicus (strain DSM 2379 / NBRC 103807 / OttBd1).